The sequence spans 444 residues: Multidrug resistance protein MdtA (444 aa).

The first 20 residues, methionine 1–alanine 20, serve as a signal peptide directing secretion. Polar residues predominate over residues asparagine 37 to serine 52. 2 disordered regions span residues asparagine 37–proline 60 and threonine 398–serine 444. The span at alanine 406 to glutamate 419 shows a compositional bias: low complexity. Positions alanine 435 to serine 444 are enriched in polar residues.

This sequence belongs to the membrane fusion protein (MFP) (TC 8.A.1) family. In terms of assembly, part of a tripartite efflux system composed of MdtA, MdtB and MdtC.

The protein localises to the cell inner membrane. This is Multidrug resistance protein MdtA from Yersinia pestis bv. Antiqua (strain Antiqua).